A 537-amino-acid polypeptide reads, in one-letter code: Phosphoenolpyruvate carboxykinase (ATP) (537 aa).

The substrate site is built by arginine 61, tyrosine 195, and lysine 201. ATP-binding positions include lysine 201, histidine 220, and 236 to 244; that span reads GLSGTGKTT. Mn(2+)-binding residues include lysine 201 and histidine 220. Aspartate 257 contributes to the Mn(2+) binding site. Glutamate 285 contacts ATP. Residues 311–321 show a composition bias toward basic and acidic residues; that stretch reads PDFDNGSKTEN. Residues 311–342 form a disordered region; that stretch reads PDFDNGSKTENTRSAYPLESIPNASPTGRAGQ. Arginine 323 provides a ligand contact to substrate. ATP is bound by residues arginine 323 and threonine 448.

Belongs to the phosphoenolpyruvate carboxykinase (ATP) family. Mn(2+) is required as a cofactor.

The protein resides in the cytoplasm. It catalyses the reaction oxaloacetate + ATP = phosphoenolpyruvate + ADP + CO2. Its pathway is carbohydrate biosynthesis; gluconeogenesis. Involved in the gluconeogenesis. Catalyzes the conversion of oxaloacetate (OAA) to phosphoenolpyruvate (PEP) through direct phosphoryl transfer between the nucleoside triphosphate and OAA. This chain is Phosphoenolpyruvate carboxykinase (ATP), found in Rhodopseudomonas palustris (strain BisB5).